Reading from the N-terminus, the 248-residue chain is FCS-Like Zinc finger 14 (248 aa).

A compositionally biased stretch (polar residues) spans 85-94 (VCRSEPNQPG). Residues 85-108 (VCRSEPNQPGRSDPVQFMSHGGST) are disordered. The FLZ-type zinc finger occupies 181 to 224 (GFLNSCYLCRKKLHGQDIFIYRGEKAFCSTECRSSHIANDERKE).

It belongs to the FLZ family. Interacts with KIN10 and KIN11 via its FLZ-type zinc finger domain. Interacts with KINB1, KINB2 and KINB3 via its N-terminal part.

Its subcellular location is the cytoplasm. The protein localises to the nucleus. Functionally, may act as an adapter to facilitate the interaction of SnRK1 complex with effector proteins, conferring tissue- and stimulus-type specific differences in the SnRK1 regulation pathway. This is FCS-Like Zinc finger 14 from Arabidopsis thaliana (Mouse-ear cress).